Consider the following 142-residue polypeptide: Large ribosomal subunit protein uL11 (142 aa).

It belongs to the universal ribosomal protein uL11 family. In terms of assembly, part of the ribosomal stalk of the 50S ribosomal subunit. Interacts with L10 and the large rRNA to form the base of the stalk. L10 forms an elongated spine to which L12 dimers bind in a sequential fashion forming a multimeric L10(L12)X complex. Post-translationally, one or more lysine residues are methylated.

Functionally, forms part of the ribosomal stalk which helps the ribosome interact with GTP-bound translation factors. In Mycoplasma capricolum subsp. capricolum (strain California kid / ATCC 27343 / NCTC 10154), this protein is Large ribosomal subunit protein uL11.